Consider the following 205-residue polypeptide: Urease accessory protein UreE (205 aa).

Residues 170 to 192 (EHHGHSHSHSHDHDHDHDHDHQH) are compositionally biased toward basic and acidic residues. Residues 170 to 205 (EHHGHSHSHSHDHDHDHDHDHQHGPCCSHGHHHGHR) form a disordered region.

The protein belongs to the UreE family.

It localises to the cytoplasm. In terms of biological role, involved in urease metallocenter assembly. Binds nickel. Probably functions as a nickel donor during metallocenter assembly. This is Urease accessory protein UreE from Burkholderia pseudomallei (strain 668).